A 920-amino-acid chain; its full sequence is Histone-lysine N-methyltransferase, H3 lysine-4 specific (920 aa).

Residues 94–179 (TQVFVSNISP…KPLSVVLDRD (86 aa)) form the RRM domain. A compositionally biased stretch (basic and acidic residues) spans 205–216 (KQRFEREDESSR). Disordered stretches follow at residues 205–242 (KQRF…TLSN) and 448–485 (KRVD…YQLN). Composition is skewed to polar residues over residues 233-242 (PSKNSQTLSN) and 453-462 (SKMNLSAGSK). The span at 463-476 (TKSKLQRRRRRRHE) shows a compositional bias: basic residues. Residues 749–754 (RVNNRR) carry the RxxxRR motif motif. An SET domain is found at 781–898 (KQLHFGPSRI…HGEELTYDYK (118 aa)). Tyrosine 897 is an S-adenosyl-L-methionine binding site. A Post-SET domain is found at 904-920 (DKIPCLCGAPTCRGYLN).

The protein belongs to the class V-like SAM-binding methyltransferase superfamily. As to quaternary structure, component of the Set1C/COMPASS complex composed of ash2, sdc1, set1, shg1, spp1, swd1, swd2 and swd3.

It is found in the nucleus. The protein resides in the chromosome. The catalysed reaction is L-lysyl(4)-[histone H3] + 3 S-adenosyl-L-methionine = N(6),N(6),N(6)-trimethyl-L-lysyl(4)-[histone H3] + 3 S-adenosyl-L-homocysteine + 3 H(+). It carries out the reaction N(6)-methyl-L-lysyl(4)-[histone H3] + S-adenosyl-L-methionine = N(6),N(6)-dimethyl-L-lysyl(4)-[histone H3] + S-adenosyl-L-homocysteine + H(+). It catalyses the reaction N(6),N(6)-dimethyl-L-lysyl(4)-[histone H3] + S-adenosyl-L-methionine = N(6),N(6),N(6)-trimethyl-L-lysyl(4)-[histone H3] + S-adenosyl-L-homocysteine + H(+). Catalytic component of the COMPASS (Set1C) complex that specifically mono-, di- and trimethylates histone H3 to form H3K4me1/2/3. Binds RNA which might negatively affect its histone methyltransferase activity. COMPASS recognizes ubiquitinated H2B on one face of the nucleosome which stimulates the methylation of H3 on the opposing face. Methylation promotes maintenance of active chromatin states at euchromatic chromosomal domains and is present throughout the cell cycle. Plays a role in telomere maintenance and DNA repair in an ATM kinase rad3-dependent pathway. Required for efficient telomeric and centromeric silencing. The polypeptide is Histone-lysine N-methyltransferase, H3 lysine-4 specific (Schizosaccharomyces pombe (strain 972 / ATCC 24843) (Fission yeast)).